A 180-amino-acid chain; its full sequence is Succinate dehydrogenase cytochrome B subunit, mitochondrial (180 aa).

Topologically, residues methionine 1–threonine 82 are mitochondrial matrix. The chain crosses the membrane as a helical span at residues glycine 83 to alanine 103. The Mitochondrial intermembrane segment spans residues glycine 104 to tryptophan 122. Residues isoleucine 123 to isoleucine 143 traverse the membrane as a helical segment. Histidine 138 contacts heme. Over arginine 144 to valine 159 the chain is Mitochondrial matrix. Residues tyrosine 160–isoleucine 180 traverse the membrane as a helical segment.

Belongs to the cytochrome b560 family. Forms part of complex II containing four subunits: a 70 kDa flavoprotein (FP), a 27 kDa iron-sulfur protein (IP), a cytochrome B and a membrane-anchoring protein. Heme serves as cofactor.

It localises to the mitochondrion inner membrane. Its pathway is carbohydrate metabolism; tricarboxylic acid cycle. Membrane-anchoring subunit of succinate dehydrogenase (SDH) that is involved in complex II of the mitochondrial electron transport chain and is responsible for transferring electrons from succinate to ubiquinone (coenzyme Q). In Schizosaccharomyces pombe (strain 972 / ATCC 24843) (Fission yeast), this protein is Succinate dehydrogenase cytochrome B subunit, mitochondrial (sdh3).